The sequence spans 293 residues: 4-hydroxy-tetrahydrodipicolinate synthase 1 (293 aa).

Thr46 serves as a coordination point for pyruvate. Residue Tyr134 is the Proton donor/acceptor of the active site. The active-site Schiff-base intermediate with substrate is Lys162. Residue Ile204 coordinates pyruvate.

It belongs to the DapA family. As to quaternary structure, homotetramer; dimer of dimers.

The protein resides in the cytoplasm. The enzyme catalyses L-aspartate 4-semialdehyde + pyruvate = (2S,4S)-4-hydroxy-2,3,4,5-tetrahydrodipicolinate + H2O + H(+). Its pathway is amino-acid biosynthesis; L-lysine biosynthesis via DAP pathway; (S)-tetrahydrodipicolinate from L-aspartate: step 3/4. Functionally, catalyzes the condensation of (S)-aspartate-beta-semialdehyde [(S)-ASA] and pyruvate to 4-hydroxy-tetrahydrodipicolinate (HTPA). In Clostridium acetobutylicum (strain ATCC 824 / DSM 792 / JCM 1419 / IAM 19013 / LMG 5710 / NBRC 13948 / NRRL B-527 / VKM B-1787 / 2291 / W), this protein is 4-hydroxy-tetrahydrodipicolinate synthase 1.